We begin with the raw amino-acid sequence, 349 residues long: Ion-translocating oxidoreductase complex subunit D (349 aa).

The next 3 membrane-spanning stretches (helical) occupy residues 36–56 (CAFF…VALS), 77–99 (SAML…WMIV), and 124–144 (AMAA…SWIA). The residue at position 185 (T185) is an FMN phosphoryl threonine. Helical transmembrane passes span 212–232 (GTGV…LVLL), 239–259 (WHIS…GFLL), 265–285 (ASPL…FIAT), 291–311 (ATSP…VYII), and 315–335 (GGYP…APFI).

It belongs to the NqrB/RnfD family. In terms of assembly, the complex is composed of six subunits: RnfA, RnfB, RnfC, RnfD, RnfE and RnfG. It depends on FMN as a cofactor.

The protein resides in the cell inner membrane. In terms of biological role, part of a membrane-bound complex that couples electron transfer with translocation of ions across the membrane. The protein is Ion-translocating oxidoreductase complex subunit D of Shewanella sp. (strain ANA-3).